Consider the following 270-residue polypeptide: Bacterial microcompartment shell protein PduB (270 aa).

2 BMC circularly permuted domains span residues 47 to 152 (EFVG…DRTF) and 154 to 262 (DVYA…GSEP).

The protein belongs to the EutL/PduB family. As to quaternary structure, homotrimerizes to form a pseudohexamer with a central pore. The trimers pack into an array. Both forms interact with shell protein PduA. In terms of processing, in purified BMCs seen as a 30.0 kDa and 25.0 kDa form; the smaller form is called PduB'.

The protein localises to the bacterial microcompartment. It functions in the pathway polyol metabolism; 1,2-propanediol degradation. In terms of biological role, the two proteins produced are among the major shell proteins of the bacterial microcompartment (BMC) shell dedicated to 1,2-propanediol (1,2-PD) degradation. Overexpression of the gene gives large amorphous intracellular structures; when only PduB is overexpressed large circular bodies are observed which contain concentric rings, whereas with PduB' overexpression internal bodies with regular straight-lined structures were generated. The N-terminus of the long form (PduB) is required for correct formation of BMCs. May play a major role in binding the enzyme contents to the shell. Its function is as follows. Expression of a cosmid containing the full 21-gene pdu operon in E.coli allows E.coli to grow on 1,2-propanediol (1,2-PD) with the appearance of BMCs in its cytoplasm. Functionally, the 1,2-PD-specific bacterial microcompartment (BMC) concentrates low levels of 1,2-PD catabolic enzymes, concentrates volatile reaction intermediates thus enhancing pathway flux and keeps the level of toxic, mutagenic propionaldehyde low. The chain is Bacterial microcompartment shell protein PduB from Citrobacter freundii.